Reading from the N-terminus, the 425-residue chain is MNSIWKQYIDILQGVVKPALGCTEPICAAYAASVATQMLGSKPETIDVFVSDNLYKNSMGVFVPRTGRVGLAIAAATGAIGGNPDAGLEVLAKITEEEVNEAQSLIDNGCVVVQRETTDEFIYCRVIAKNALHSAEVTISGGHTLIIEKRLDGNIIFTLDSSLPKTSTASICDGVDITISSIYDFATQAEFDDIKFILEAKELNIALAQEGLNNPYGLEVGRTYQKNIEKGLLAKSLDSDILIYTSAASDARMGGATLPAMSNYGSGNQGIAATIPVVKMADFFNADDEKLARAFIMSHLGAIYIKSHYPPLSAFCGNAVTSAAASMAMVYLAGGTFEQSCSAIQNTISDTSGMICDGAKSTCAMKVGSSAQSAMKSALLALNDHCVTKQGVIADDVEKTIKNIGRMITTGMPNIDHEIIEIMAS.

It belongs to the UPF0597 family.

In Aliivibrio fischeri (strain MJ11) (Vibrio fischeri), this protein is UPF0597 protein VFMJ11_0655.